The primary structure comprises 158 residues: C-type lectin galactose-binding isoform (158 aa).

The N-terminal stretch at 1 to 23 (MGRFLLVTLSLLVVAFSLNGANS) is a signal peptide. 3 disulfide bridges follow: cysteine 26–cysteine 37, cysteine 54–cysteine 154, and cysteine 129–cysteine 146. Positions 33–155 (RNGFCYKVFN…CTALRPFLCQ (123 aa)) constitute a C-type lectin domain. Residues glutamine 119, aspartate 121, and glutamate 127 each coordinate Ca(2+). Residues 119–121 (QPD) carry the Galactose-binding motif. N-linked (GlcNAc...) asparagine glycosylation occurs at asparagine 134. Residues asparagine 142 and aspartate 143 each contribute to the Ca(2+) site.

Belongs to the true venom lectin family. Homodimer; disulfide-linked. In terms of tissue distribution, expressed by the venom gland.

It is found in the secreted. Galactose-binding lectin that binds to and agglutinates erythrocytes in a calcium-dependent manner. The sequence is that of C-type lectin galactose-binding isoform from Pseudechis porphyriacus (Red-bellied black snake).